The chain runs to 273 residues: Dermonecrotic toxin LhSicTox-alphaIA2biv (273 aa).

The active site involves His-5. Residues Glu-25 and Asp-27 each contribute to the Mg(2+) site. Catalysis depends on His-41, which acts as the Nucleophile. Cystine bridges form between Cys-45–Cys-51 and Cys-47–Cys-190. Asp-85 serves as a coordination point for Mg(2+).

It belongs to the arthropod phospholipase D family. Class II subfamily. The cofactor is Mg(2+). In terms of tissue distribution, expressed by the venom gland.

It is found in the secreted. The catalysed reaction is an N-(acyl)-sphingosylphosphocholine = an N-(acyl)-sphingosyl-1,3-cyclic phosphate + choline. It carries out the reaction an N-(acyl)-sphingosylphosphoethanolamine = an N-(acyl)-sphingosyl-1,3-cyclic phosphate + ethanolamine. The enzyme catalyses a 1-acyl-sn-glycero-3-phosphocholine = a 1-acyl-sn-glycero-2,3-cyclic phosphate + choline. It catalyses the reaction a 1-acyl-sn-glycero-3-phosphoethanolamine = a 1-acyl-sn-glycero-2,3-cyclic phosphate + ethanolamine. Dermonecrotic toxins cleave the phosphodiester linkage between the phosphate and headgroup of certain phospholipids (sphingolipid and lysolipid substrates), forming an alcohol (often choline) and a cyclic phosphate. This toxin acts on sphingomyelin (SM). It may also act on ceramide phosphoethanolamine (CPE), lysophosphatidylcholine (LPC) and lysophosphatidylethanolamine (LPE), but not on lysophosphatidylserine (LPS), and lysophosphatidylglycerol (LPG). It acts by transphosphatidylation, releasing exclusively cyclic phosphate products as second products. Induces dermonecrosis, hemolysis, increased vascular permeability, edema, inflammatory response, and platelet aggregation. The polypeptide is Dermonecrotic toxin LhSicTox-alphaIA2biv (Loxosceles hirsuta (Recluse spider)).